A 538-amino-acid polypeptide reads, in one-letter code: Tryptophan 7-halogenase PrnA (538 aa).

Positions 13, 15, 16, 39, 42, 45, 49, and 50 each coordinate FAD. Lysine 79 is a catalytic residue. Lysine 79 provides a ligand contact to 7-chloro-L-tryptophan. FAD-binding residues include valine 187 and leucine 337. Residue glutamate 346 coordinates 7-chloro-L-tryptophan. Glutamate 346 is an L-tryptophan binding site. Chloride contacts are provided by threonine 348 and glycine 349. An FAD-binding site is contributed by isoleucine 350. Residues tyrosine 443, tyrosine 444, glutamate 450, and phenylalanine 454 each coordinate 7-chloro-L-tryptophan. Residues tyrosine 443, tyrosine 444, glutamate 450, and phenylalanine 454 each coordinate L-tryptophan.

It belongs to the flavin-dependent halogenase family. Bacterial tryptophan halogenase subfamily. In terms of assembly, homodimer.

It catalyses the reaction L-tryptophan + FADH2 + chloride + O2 = 7-chloro-L-tryptophan + FAD + 2 H2O. Its pathway is antibiotic biosynthesis. Functionally, involved in the biosynthesis of the antifungal antibiotic pyrrolnitrin. Catalyzes the chlorination of tryptophan (Trp) at C7 position to yield 7-chloro-L-tryptophan (7-CLT). This Pseudomonas fluorescens protein is Tryptophan 7-halogenase PrnA.